The following is a 267-amino-acid chain: Tryptophan synthase alpha chain (267 aa).

Active-site proton acceptor residues include E47 and D58.

This sequence belongs to the TrpA family. Tetramer of two alpha and two beta chains.

It carries out the reaction (1S,2R)-1-C-(indol-3-yl)glycerol 3-phosphate + L-serine = D-glyceraldehyde 3-phosphate + L-tryptophan + H2O. It participates in amino-acid biosynthesis; L-tryptophan biosynthesis; L-tryptophan from chorismate: step 5/5. In terms of biological role, the alpha subunit is responsible for the aldol cleavage of indoleglycerol phosphate to indole and glyceraldehyde 3-phosphate. This is Tryptophan synthase alpha chain from Chlorobium chlorochromatii (strain CaD3).